A 578-amino-acid chain; its full sequence is Frizzled-2 (578 aa).

An N-terminal signal peptide occupies residues 1–17 (MLLRISVLFLLLGSCGA). The Extracellular segment spans residues 18 to 236 (LFGKRQKCEQ…AESHSLVSNW (219 aa)). Positions 20 to 144 (GKRQKCEQIT…MSTGNICAAP (125 aa)) constitute an FZ domain. Disulfide bonds link Cys-25-Cys-86, Cys-33-Cys-79, Cys-70-Cys-108, Cys-97-Cys-141, and Cys-101-Cys-125. An N-linked (GlcNAc...) asparagine glycan is attached at Asn-39. The interval 138-175 (GNICAAPPDTPKKQHKGHHHKNQNQNQNQNHNYSPDGP) is disordered. A compositionally biased stretch (basic residues) spans 150 to 159 (KQHKGHHHKN). The segment covering 160-169 (QNQNQNQNHN) has biased composition (low complexity). Asn-213 carries N-linked (GlcNAc...) asparagine glycosylation. The helical transmembrane segment at 237–257 (MAFWSITCCVLASFTFLTFLI) threads the bilayer. Residues 258–268 (ETDRFQYPERP) are Cytoplasmic-facing. Residues 269 to 289 (IFMLAFCQLMVAVGFMIRYFV) form a helical membrane-spanning segment. Topologically, residues 290–312 (GHEEIACDSMRIKGADDNSGSLC) are extracellular. A helical transmembrane segment spans residues 313 to 333 (FVVFLLTYFFGMAASVWWVIL). Residues 334-354 (SLTWVLSAASKWSPEAISSFS) lie on the Cytoplasmic side of the membrane. The chain crosses the membrane as a helical span at residues 355-375 (FHFHVVGWCLPAIQTVLVIVF). The Extracellular portion of the chain corresponds to 376–398 (NAIDGDPITGICYVGNTDLQFQR). Residues 399 to 419 (IFVLFPLLVYFIVGVLFLVIG) form a helical membrane-spanning segment. Topologically, residues 420–449 (FCNLWSIRNEVQKQHPSLESAHKITQLMSK) are cytoplasmic. A helical membrane pass occupies residues 450–470 (IGIFSLLYTIPSLLIICVLFY). Topologically, residues 471-497 (EQNHRSLWEQSQLCSCSPKQTIGDSSL) are extracellular. Residues 498–518 (IISLIKTCCMCILGWTSGFWV) traverse the membrane as a helical segment. The Cytoplasmic segment spans residues 519 to 578 (CSTKTLSSWKNAICCLGSSRSLPKYQPADILYAKSDMSSSQFYNTSLRHNHLYGGIPDKL). The Lys-Thr-X-X-X-Trp motif, mediates interaction with the PDZ domain of Dvl family members motif lies at 522-527 (KTLSSW). Residues 556–558 (SSS) carry the PDZ-binding motif.

It belongs to the G-protein coupled receptor Fz/Smo family. As to expression, expressed in two pairs of head neurons and throughout the pharynx.

It is found in the cell membrane. Its function is as follows. Receptor for Wnt proteins. Most frizzled receptors are coupled to the beta-catenin canonical signaling pathway, which leads to the activation of disheveled proteins, inhibition of gsk-3 kinase, nuclear accumulation of beta-catenin and activation of Wnt target genes. A second signaling pathway involving PKC and calcium fluxes has been seen for some family members, but it is not yet clear if it represents a distinct pathway or if it can be integrated in the canonical pathway, as PKC seems to be required for Wnt-mediated inactivation of gsk-3 kinase. Both pathways seem to involve interactions with G-proteins. Required for the migration and axon formation and guidance of different neuronal cell types including canal-associated neurons (CAN), hermaphrodite-specific neurons (HSN), anterior lateral microtubule neurons (ALM), and the right Q neuroblast (QR) and its descendants. Directs ALM migration through frizzled protein mom-5 and Wnt ligands cwn-1, cwn-2 and egl-20. May act redundantly with mom-5 to direct CAN migration. Plays a role in the organization of head ganglion cells. Probably by acting as a receptor for Wnt ligand cwn-2, plays a role in the positioning of the nerve ring and may in addition positively regulate the neurite outgrowth of RME GABAergic motor neurons along the anterior-posterior axis of the body. The protein is Frizzled-2 of Caenorhabditis elegans.